The sequence spans 54 residues: Hemoglobin subunit omega (54 aa).

The 53-residue stretch at 2–54 (HWTAEEKQIILAIWAKIDIEEAGAAALSRLLVVYPWTQRYFKNFGNLSSPTAI) folds into the Globin domain.

Belongs to the globin family.

In terms of biological role, hemoglobin omega chain is an embryonic-type beta-type chain found in prenatal and neonatal marsupials. The polypeptide is Hemoglobin subunit omega (Notamacropus eugenii (Tammar wallaby)).